A 107-amino-acid polypeptide reads, in one-letter code: HTH-type transcriptional regulator Rv2034 (107 aa).

One can recognise an HTH arsR-type domain in the interval 1–93 (MSTYRSPDRA…DLDRFWTRAL (93 aa)). The segment at residues 33–56 (VGELARDLPVSRPAVSQHLKVLKT) is a DNA-binding region (H-T-H motif).

As to quaternary structure, homodimer.

With respect to regulation, DNA-binding ability is not susceptible to zinc, nickel, cobalt, cadmium, lead, copper and manganese ions. In terms of biological role, involved in the regulation of lipid metabolism and hypoxic response. Positively regulates transcription of various genes, such as phoP, groEL2 and dosR. Negatively regulates its own transcription. Acts by binding to a specific palindromic sequence motif in promoter regions. The chain is HTH-type transcriptional regulator Rv2034 from Mycobacterium tuberculosis (strain ATCC 25618 / H37Rv).